Consider the following 344-residue polypeptide: uncharacterized protein (344 aa).

At 1 to 98 (MIDFVKSRDT…NNDEIGIWNY (98 aa)) the chain is on the cytoplasmic side. The chain crosses the membrane as a helical span at residues 99-119 (ISVAEMGGVLLFLSYWIWTCL). H120 is a topological domain (lumenal). Residues 121–141 (FSKIIFPAQKVICLYIFLFAL) form a helical membrane-spanning segment. Topologically, residues 142-169 (NQTLQECIEEYVFSSECIKYRQFYSVYE) are cytoplasmic. The helical transmembrane segment at 170–192 (IIDFLRTNFYRLFVIYCALGFGI) threads the bilayer. Residues 193–198 (TRTVPK) lie on the Lumenal side of the membrane. A helical transmembrane segment spans residues 199–219 (YLMIKGISIVIALCSVYWISL). Residues 220-222 (YKD) lie on the Cytoplasmic side of the membrane. Residues 223–243 (VYVVSEIFDMIQYEVFPAIWV) form a helical membrane-spanning segment. Over 244–273 (YSICHLLKQCTSVTTYENASKARFFRRMLN) the chain is Lumenal. A helical membrane pass occupies residues 274 to 294 (AFIFIFCASPMLHYLSNIIFG). Topologically, residues 295–344 (NFDYRLSVIIGDLFTFMEKIAFPCYIMFPTHNEALAYNRNVAEEAQEKMI) are cytoplasmic.

Its subcellular location is the endoplasmic reticulum membrane. This is an uncharacterized protein from Schizosaccharomyces pombe (strain 972 / ATCC 24843) (Fission yeast).